A 433-amino-acid chain; its full sequence is Chaperone SurA (433 aa).

Residues 1–20 form the signal peptide; that stretch reads MKNWRTLIFGLMFSVSTAFA. 2 consecutive PpiC domains span residues 171–272 and 282–382; these read DTEL…KVND and VTEV…QLLD.

The protein resides in the periplasm. It catalyses the reaction [protein]-peptidylproline (omega=180) = [protein]-peptidylproline (omega=0). In terms of biological role, chaperone involved in the correct folding and assembly of outer membrane proteins. Recognizes specific patterns of aromatic residues and the orientation of their side chains, which are found more frequently in integral outer membrane proteins. May act in both early periplasmic and late outer membrane-associated steps of protein maturation. The chain is Chaperone SurA from Photorhabdus laumondii subsp. laumondii (strain DSM 15139 / CIP 105565 / TT01) (Photorhabdus luminescens subsp. laumondii).